A 2431-amino-acid polypeptide reads, in one-letter code: Reducing polyketide synthase rads1 (2431 aa).

In terms of domain architecture, Ketosynthase family 3 (KS3) spans 10–440 (RAPIAIIGLA…GTNAHIVLER (431 aa)). Active-site for beta-ketoacyl synthase activity residues include C184, H319, and H363. The tract at residues 558–895 (FVFTGQGAQW…NLAAELFRRG (338 aa)) is malonyl-CoA:ACP transacylase (MAT) domain. An N-terminal hotdog fold region spans residues 944–1080 (KSILGAELPS…GLISIAYEDT (137 aa)). The 324-residue stretch at 944-1267 (KSILGAELPS…LAELEVDDAA (324 aa)) folds into the PKS/mFAS DH domain. The dehydratase (DH) domain stretch occupies residues 946 to 1264 (ILGAELPSMD…DFRLAELEVD (319 aa)). H976 serves as the catalytic Proton acceptor; for dehydratase activity. The interval 1108-1267 (PETCSKERFY…LAELEVDDAA (160 aa)) is C-terminal hotdog fold. The Proton donor; for dehydratase activity role is filled by D1174. The segment at 1705–2023 (GLLNTLHFVP…QGKHLGKMIL (319 aa)) is enoyl reductase (ER) domain. C1822 functions as the Phosphocysteine intermediate in the catalytic mechanism. The tract at residues 2048–2228 (ATYLIVGGLG…VSVNLGIMRD (181 aa)) is ketoreductase (KR) domain. The Carrier domain occupies 2346 to 2423 (VAAAIITEAL…TFAVQIAKKS (78 aa)). S2383 is modified (O-(pantetheine 4'-phosphoryl)serine).

It functions in the pathway secondary metabolite biosynthesis. Functionally, reducing polyketide synthase; part of the gene cluster that mediates the biosynthesis of radicicol, a resorcylic acid lactone (RAL) that irreversibly inhibits the HSP90 molecular chaperone, an important target for cancer chemotherapy. The cluster encodes only two apparent post-PKS enzymes, a cytochrome P450 monooxygenase (radP) and a non-heme halogenase (radH) that introduce the epoxide and the chlorine, respectively. If this cluster includes all the genes required for radicicol biosynthesis, the remaining structural features of radicicol are presumably generated by the PKSs rads1 and rads2. The C-2' ketone could arise if the R-PKS rads1 and NR-PKS rads2 each carry out four iterations, in contrast to the five iteration-three iteration split for the hypothemycin PKSs. The origin of the cis 5',6' double bond is not known. The radicicol R-PKS radS1 ER domain may catalyze either double bond isomerization or reduction in the third iteration. The polypeptide is Reducing polyketide synthase rads1 (Floropilus chiversii (Chaetomium chiversii)).